The primary structure comprises 335 residues: Adenosine deaminase (335 aa).

Zn(2+)-binding residues include histidine 12 and histidine 14. Substrate-binding residues include histidine 14 and aspartate 16. A Zn(2+)-binding site is contributed by histidine 197. Glutamate 200 acts as the Proton donor in catalysis. Aspartate 278 lines the Zn(2+) pocket.

The protein belongs to the metallo-dependent hydrolases superfamily. Adenosine and AMP deaminases family. Adenosine deaminase subfamily. Zn(2+) is required as a cofactor.

It catalyses the reaction adenosine + H2O + H(+) = inosine + NH4(+). It carries out the reaction 2'-deoxyadenosine + H2O + H(+) = 2'-deoxyinosine + NH4(+). Its function is as follows. Catalyzes the hydrolytic deamination of adenosine and 2-deoxyadenosine. The protein is Adenosine deaminase of Clostridium botulinum (strain Okra / Type B1).